The sequence spans 208 residues: Large ribosomal subunit protein uL4 (208 aa).

The segment at arginine 45 to serine 77 is disordered.

It belongs to the universal ribosomal protein uL4 family. In terms of assembly, part of the 50S ribosomal subunit.

Its function is as follows. One of the primary rRNA binding proteins, this protein initially binds near the 5'-end of the 23S rRNA. It is important during the early stages of 50S assembly. It makes multiple contacts with different domains of the 23S rRNA in the assembled 50S subunit and ribosome. In terms of biological role, forms part of the polypeptide exit tunnel. In Christiangramia forsetii (strain DSM 17595 / CGMCC 1.15422 / KT0803) (Gramella forsetii), this protein is Large ribosomal subunit protein uL4.